We begin with the raw amino-acid sequence, 220 residues long: Metalloproteinase inhibitor 2 (220 aa).

A signal peptide spans 1–26 (MGAAARTLRLALGLLLLATLLRPADA). Cys-27 provides a ligand contact to Zn(2+). 2 involved in metalloproteinase-binding regions span residues 27 to 30 (CSCS) and 95 to 96 (SA). Disulfide bonds link Cys-27-Cys-98, Cys-29-Cys-127, Cys-39-Cys-152, Cys-154-Cys-201, Cys-159-Cys-164, and Cys-172-Cys-193. The 126-residue stretch at 27-152 (CSCSPVHPQQ…SLNHRYQMGC (126 aa)) folds into the NTR domain.

It belongs to the protease inhibitor I35 (TIMP) family. Interacts (via the C-terminal) with MMP2 (via the C-terminal PEX domain); the interaction inhibits the MMP2 activity. In terms of processing, the activity of TIMP2 is dependent on the presence of disulfide bonds.

It is found in the secreted. Functionally, complexes with metalloproteinases (such as collagenases) and irreversibly inactivates them by binding to their catalytic zinc cofactor. Known to act on MMP-1, MMP-2, MMP-3, MMP-7, MMP-8, MMP-9, MMP-10, MMP-13, MMP-14, MMP-15, MMP-16 and MMP-19. This is Metalloproteinase inhibitor 2 (TIMP2) from Homo sapiens (Human).